Consider the following 98-residue polypeptide: Putative membrane protein insertion efficiency factor (98 aa).

Belongs to the UPF0161 family.

Its subcellular location is the cell inner membrane. Its function is as follows. Could be involved in insertion of integral membrane proteins into the membrane. The sequence is that of Putative membrane protein insertion efficiency factor from Cupriavidus pinatubonensis (strain JMP 134 / LMG 1197) (Cupriavidus necator (strain JMP 134)).